Reading from the N-terminus, the 896-residue chain is Myelin regulatory factor-like protein (896 aa).

Residues 111–403 constitute a DNA-binding region (NDT80); it reads GLPHRTFHNC…SNPGQFENDI (293 aa). The region spanning 449–557 is the Peptidase S74 domain; sequence SDSRAKQNVQ…KLTNNLEERI (109 aa). A coiled-coil region spans residues 541–573; the sequence is GAVKQLCKLTNNLEERIEELEIWNRKLARLKRL. Residues 622–638 form a helical membrane-spanning segment; the sequence is VFQSLVITLIAVMAFCL. The span at 648–658 shows a compositional bias: polar residues; it reads APSSNLTSSQE. Residues 648–672 are disordered; sequence APSSNLTSSQEPALPSTASPSAPNT. The segment covering 659 to 672 has biased composition (low complexity); that stretch reads PALPSTASPSAPNT.

The protein belongs to the MRF family.

The protein localises to the membrane. The chain is Myelin regulatory factor-like protein (MYRFL) from Bos taurus (Bovine).